A 771-amino-acid chain; its full sequence is DnaJ homolog subfamily C member 16 (771 aa).

The signal sequence occupies residues 1–25; that stretch reads MELKRLSISWQFLIVLVLILQSLSA. Residues 26–532 are Cytoplasmic-facing; the sequence is LDFDPYRVLG…ESLLHSNWRE (507 aa). The J domain occupies 29 to 93; sequence DPYRVLGVSR…EKRTNYDHYG (65 aa). Residues 116–244 form the Thioredoxin domain; the sequence is FYFDESFFHF…LRQFVESLLP (129 aa). A helical; Anchor for type IV membrane protein transmembrane segment spans residues 533–553; it reads MMPLLSLIFSALFILFGTVIV. The Extracellular portion of the chain corresponds to 554–771; the sequence is QAFSDSNEER…FYIPSWPELD (218 aa). Positions 559 to 590 are disordered; sequence SNEERESHPPDKEEVPEKAGKTEPSFTKESSS. The span at 560 to 579 shows a compositional bias: basic and acidic residues; sequence NEERESHPPDKEEVPEKAGK. Asparagine 628 carries N-linked (GlcNAc...) asparagine glycosylation.

It localises to the endoplasmic reticulum membrane. Plays an important role in regulating the size of autophagosomes during the formation process. The sequence is that of DnaJ homolog subfamily C member 16 (Dnajc16) from Rattus norvegicus (Rat).